The sequence spans 486 residues: Aspartyl/glutamyl-tRNA(Asn/Gln) amidotransferase subunit B (486 aa).

The protein belongs to the GatB/GatE family. GatB subfamily. As to quaternary structure, heterotrimer of A, B and C subunits.

The catalysed reaction is L-glutamyl-tRNA(Gln) + L-glutamine + ATP + H2O = L-glutaminyl-tRNA(Gln) + L-glutamate + ADP + phosphate + H(+). It carries out the reaction L-aspartyl-tRNA(Asn) + L-glutamine + ATP + H2O = L-asparaginyl-tRNA(Asn) + L-glutamate + ADP + phosphate + 2 H(+). Its function is as follows. Allows the formation of correctly charged Asn-tRNA(Asn) or Gln-tRNA(Gln) through the transamidation of misacylated Asp-tRNA(Asn) or Glu-tRNA(Gln) in organisms which lack either or both of asparaginyl-tRNA or glutaminyl-tRNA synthetases. The reaction takes place in the presence of glutamine and ATP through an activated phospho-Asp-tRNA(Asn) or phospho-Glu-tRNA(Gln). This is Aspartyl/glutamyl-tRNA(Asn/Gln) amidotransferase subunit B from Orientia tsutsugamushi (strain Ikeda) (Rickettsia tsutsugamushi).